The following is a 212-amino-acid chain: Uridine kinase (212 aa).

13 to 20 (GGSGSGKT) provides a ligand contact to ATP.

This sequence belongs to the uridine kinase family.

Its subcellular location is the cytoplasm. The catalysed reaction is uridine + ATP = UMP + ADP + H(+). It carries out the reaction cytidine + ATP = CMP + ADP + H(+). Its pathway is pyrimidine metabolism; CTP biosynthesis via salvage pathway; CTP from cytidine: step 1/3. The protein operates within pyrimidine metabolism; UMP biosynthesis via salvage pathway; UMP from uridine: step 1/1. The polypeptide is Uridine kinase (Bacillus cytotoxicus (strain DSM 22905 / CIP 110041 / 391-98 / NVH 391-98)).